We begin with the raw amino-acid sequence, 139 residues long: Large ribosomal subunit protein eL34 (139 aa).

Positions 113–139 (VSKPPKIAKAPAAAAAAKPAKTATKSK) are disordered.

This sequence belongs to the eukaryotic ribosomal protein eL34 family.

The chain is Large ribosomal subunit protein eL34 (RpL34) from Ochlerotatus triseriatus (Eastern treehole mosquito).